Consider the following 473-residue polypeptide: Glutamyl-tRNA reductase (473 aa).

Substrate-binding positions include 49-52, Ser-109, 114-116, and Gln-120; these read TCNR and EQQ. Cys-50 functions as the Nucleophile in the catalytic mechanism. An NADP(+)-binding site is contributed by 189–194; it reads GAGSMG. The disordered stretch occupies residues 445-473; sequence SGLDAGSGPQGADGPSAGPTPSAPNPSAE.

It belongs to the glutamyl-tRNA reductase family. Homodimer.

The enzyme catalyses (S)-4-amino-5-oxopentanoate + tRNA(Glu) + NADP(+) = L-glutamyl-tRNA(Glu) + NADPH + H(+). Its pathway is porphyrin-containing compound metabolism; protoporphyrin-IX biosynthesis; 5-aminolevulinate from L-glutamyl-tRNA(Glu): step 1/2. In terms of biological role, catalyzes the NADPH-dependent reduction of glutamyl-tRNA(Glu) to glutamate 1-semialdehyde (GSA). The chain is Glutamyl-tRNA reductase from Mycobacterium ulcerans (strain Agy99).